Here is a 265-residue protein sequence, read N- to C-terminus: Hydroxyethylthiazole kinase (265 aa).

M43 is a binding site for substrate. ATP contacts are provided by K118 and T165. G192 is a substrate binding site.

Belongs to the Thz kinase family. Mg(2+) is required as a cofactor.

The catalysed reaction is 5-(2-hydroxyethyl)-4-methylthiazole + ATP = 4-methyl-5-(2-phosphooxyethyl)-thiazole + ADP + H(+). Its pathway is cofactor biosynthesis; thiamine diphosphate biosynthesis; 4-methyl-5-(2-phosphoethyl)-thiazole from 5-(2-hydroxyethyl)-4-methylthiazole: step 1/1. Catalyzes the phosphorylation of the hydroxyl group of 4-methyl-5-beta-hydroxyethylthiazole (THZ). This Pyrococcus abyssi (strain GE5 / Orsay) protein is Hydroxyethylthiazole kinase.